A 313-amino-acid chain; its full sequence is Ribosomal RNA small subunit methyltransferase H (313 aa).

Residues 35 to 37, aspartate 55, phenylalanine 79, aspartate 101, and glutamine 108 each bind S-adenosyl-L-methionine; that span reads GGH.

Belongs to the methyltransferase superfamily. RsmH family.

Its subcellular location is the cytoplasm. The catalysed reaction is cytidine(1402) in 16S rRNA + S-adenosyl-L-methionine = N(4)-methylcytidine(1402) in 16S rRNA + S-adenosyl-L-homocysteine + H(+). Functionally, specifically methylates the N4 position of cytidine in position 1402 (C1402) of 16S rRNA. This chain is Ribosomal RNA small subunit methyltransferase H, found in Shigella flexneri serotype 5b (strain 8401).